The chain runs to 421 residues: Testin (421 aa).

The PET domain occupies 92–199; sequence MILTNPVAAK…GDVKLPREMN (108 aa). Residues 133–164 form a disordered region; it reads EKQPVAGSEGAQYRKKQLAKQLPAHDQDPSKC. Residues 155 to 164 show a composition bias toward basic and acidic residues; sequence PAHDQDPSKC. 3 LIM zinc-binding domains span residues 234–297, 299–359, and 362–421; these read YSCY…CDSE, PRCA…NHAV, and QGCH…KMMS.

The protein belongs to the prickle / espinas / testin family. Interacts via LIM domain 1 with ZYX. Interacts (via LIM domain 3) with ENAH and VASP. Interacts with ALKBH4, talin, actin, alpha-actinin, GRIP1 and PXN. Interacts (via LIM domain 2) with ACTL7A (via N-terminus). Heterodimer with ACTL7A; the heterodimer interacts with ENAH to form a heterotrimer.

It is found in the cytoplasm. It localises to the cell junction. The protein resides in the focal adhesion. Functionally, scaffold protein that may play a role in cell adhesion, cell spreading and in the reorganization of the actin cytoskeleton. Plays a role in the regulation of cell proliferation. May act as a tumor suppressor. In Sus scrofa (Pig), this protein is Testin (TES).